The primary structure comprises 200 residues: Probable GTP-binding protein EngB (200 aa).

One can recognise an EngB-type G domain in the interval 22–197; it reads NLPEYAFIGR…LDYIDSINRS (176 aa). GTP-binding positions include 30–37, 57–61, 75–78, 142–145, and 173–178; these read GRSNVGKS, GKTLL, DLPG, TKAD, and HFVSSS. Mg(2+) contacts are provided by Ser37 and Thr59.

It belongs to the TRAFAC class TrmE-Era-EngA-EngB-Septin-like GTPase superfamily. EngB GTPase family. It depends on Mg(2+) as a cofactor.

Its function is as follows. Necessary for normal cell division and for the maintenance of normal septation. This is Probable GTP-binding protein EngB from Phocaeicola vulgatus (strain ATCC 8482 / DSM 1447 / JCM 5826 / CCUG 4940 / NBRC 14291 / NCTC 11154) (Bacteroides vulgatus).